A 147-amino-acid chain; its full sequence is uncharacterized protein (147 aa).

Residues 72-81 (ARAKPASRAP) show a composition bias toward low complexity. Residues 72–147 (ARAKPASRAP…QGAAGRRLSP (76 aa)) are disordered.

This is an uncharacterized protein from Homo sapiens (Human).